The following is a 218-amino-acid chain: Probable cutinase 3 (218 aa).

The first 17 residues, 1–17, serve as a signal peptide directing secretion; the sequence is MSLRSVLVAALAALAVA. 2 cysteine pairs are disulfide-bonded: Cys41–Cys120 and Cys67–Cys81. The active-site Nucleophile is Ser131. The cysteines at positions 182 and 189 are disulfide-linked. Asp186 is a catalytic residue. His199 (proton donor/acceptor) is an active-site residue.

Belongs to the cutinase family.

Its subcellular location is the secreted. The enzyme catalyses cutin + H2O = cutin monomers.. Functionally, catalyzes the hydrolysis of complex carboxylic polyesters found in the cell wall of plants. Degrades cutin, a macromolecule that forms the structure of the plant cuticle. This is Probable cutinase 3 from Aspergillus terreus (strain NIH 2624 / FGSC A1156).